Reading from the N-terminus, the 492-residue chain is GTPase Der (492 aa).

2 EngA-type G domains span residues 3 to 167 and 188 to 363; these read PVVA…PAPE and ICIA…AQYA. GTP is bound by residues 9–16, 56–60, 119–122, 194–201, 241–245, and 306–309; these read GRPNVGKS, DTGGF, NKVE, DTAGI, and NKWD. The region spanning 364–448 is the KH-like domain; that stretch reads YRINTGLLNR…PIRLLFRAKT (85 aa). Residues 464–492 are disordered; that stretch reads VEKKEKKTTRRKKERKEQSRRKRVRDLKG. Residues 469 to 492 are compositionally biased toward basic residues; sequence KKTTRRKKERKEQSRRKRVRDLKG.

This sequence belongs to the TRAFAC class TrmE-Era-EngA-EngB-Septin-like GTPase superfamily. EngA (Der) GTPase family. In terms of assembly, associates with the 50S ribosomal subunit.

GTPase that plays an essential role in the late steps of ribosome biogenesis. This chain is GTPase Der, found in Desulforapulum autotrophicum (strain ATCC 43914 / DSM 3382 / VKM B-1955 / HRM2) (Desulfobacterium autotrophicum).